The following is a 448-amino-acid chain: Glutamyl-tRNA reductase (448 aa).

Substrate is bound by residues 49–52, Ser-109, 114–116, and Gln-120; these read TCNR and ETQ. Residue Cys-50 is the Nucleophile of the active site. An NADP(+)-binding site is contributed by 189–194; sequence GAGETG. The segment at 427–448 is disordered; the sequence is PVDEVEETDATSAKAPLRALMR.

The protein belongs to the glutamyl-tRNA reductase family. In terms of assembly, homodimer.

The catalysed reaction is (S)-4-amino-5-oxopentanoate + tRNA(Glu) + NADP(+) = L-glutamyl-tRNA(Glu) + NADPH + H(+). The protein operates within porphyrin-containing compound metabolism; protoporphyrin-IX biosynthesis; 5-aminolevulinate from L-glutamyl-tRNA(Glu): step 1/2. Its function is as follows. Catalyzes the NADPH-dependent reduction of glutamyl-tRNA(Glu) to glutamate 1-semialdehyde (GSA). The chain is Glutamyl-tRNA reductase from Exiguobacterium sp. (strain ATCC BAA-1283 / AT1b).